The chain runs to 139 residues: uncharacterized protein (139 aa).

Positions 54–75 (NSLHRHGDQAWGKHRRQNSLKS) are disordered.

This is an uncharacterized protein from Homo sapiens (Human).